A 72-amino-acid polypeptide reads, in one-letter code: UPF0352 protein Shal_2512 (72 aa).

The protein belongs to the UPF0352 family.

This is UPF0352 protein Shal_2512 from Shewanella halifaxensis (strain HAW-EB4).